The sequence spans 194 residues: Extracellular globin-E1 (194 aa).

2 consecutive Globin domains span residues 1 to 45 (DISH…MGLS) and 55 to 194 (GLSG…LRQA). His150 contacts heme b.

It belongs to the globin family. As to quaternary structure, artemia hemoglobin is a dimer of two similar sized subunits. Each subunit represents a globin chain which exists in two forms (alpha and beta), thus making possible three different phenotypes (HB1, alpha(2), HB2, alpha/beta, HB3, beta(2)). The globin chain is a polymer of eight heme-binding covalently linked domains.

The sequence is that of Extracellular globin-E1 from Artemia sp. (Brine shrimp).